Reading from the N-terminus, the 337-residue chain is Ketol-acid reductoisomerase (NAD(P)(+)) (337 aa).

Residues 2-187 enclose the KARI N-terminal Rossmann domain; the sequence is ARMFYDADAN…GCTRAGVIET (186 aa). NADP(+) is bound by residues 25 to 28, R48, and 88 to 91; these read FGSQ and DEVQ. H113 is a catalytic residue. Position 139 (G139) interacts with NADP(+). The KARI C-terminal knotted domain maps to 188–333; sequence SFQEETETDL…AELRGMMPWL (146 aa). 4 residues coordinate Mg(2+): D196, E200, E232, and E236. Position 257 (S257) interacts with substrate.

The protein belongs to the ketol-acid reductoisomerase family. Requires Mg(2+) as cofactor.

The enzyme catalyses (2R)-2,3-dihydroxy-3-methylbutanoate + NAD(+) = (2S)-2-acetolactate + NADH + H(+). It carries out the reaction (2R)-2,3-dihydroxy-3-methylbutanoate + NADP(+) = (2S)-2-acetolactate + NADPH + H(+). It functions in the pathway amino-acid biosynthesis; L-isoleucine biosynthesis; L-isoleucine from 2-oxobutanoate: step 2/4. The protein operates within amino-acid biosynthesis; L-valine biosynthesis; L-valine from pyruvate: step 2/4. In terms of biological role, involved in the biosynthesis of branched-chain amino acids (BCAA). Catalyzes an alkyl-migration followed by a ketol-acid reduction of (S)-2-acetolactate (S2AL) to yield (R)-2,3-dihydroxy-isovalerate. In the isomerase reaction, S2AL is rearranged via a Mg-dependent methyl migration to produce 3-hydroxy-3-methyl-2-ketobutyrate (HMKB). In the reductase reaction, this 2-ketoacid undergoes a metal-dependent reduction by NADPH or NADH to yield (R)-2,3-dihydroxy-isovalerate. This is Ketol-acid reductoisomerase (NAD(P)(+)) from Syntrophomonas wolfei subsp. wolfei (strain DSM 2245B / Goettingen).